Here is a 142-residue protein sequence, read N- to C-terminus: Photosystem II extrinsic protein U (142 aa).

Residues 1–28 (MKKIGLLLTIFSLCLGCLGLVPSDKAHA) form the signal peptide.

The protein belongs to the PsbU family. As to quaternary structure, PSII is composed of 1 copy each of membrane proteins PsbA, PsbB, PsbC, PsbD, PsbE, PsbF, PsbH, PsbI, PsbJ, PsbK, PsbL, PsbM, PsbT, PsbX, PsbY, PsbZ, Psb30/Ycf12, peripheral proteins PsbO, CyanoQ (PsbQ), PsbU, PsbV and a large number of cofactors. It forms dimeric complexes.

It localises to the cellular thylakoid membrane. Its function is as follows. One of the extrinsic, lumenal subunits of photosystem II (PSII). PSII is a light-driven water plastoquinone oxidoreductase, using light energy to abstract electrons from H(2)O, generating a proton gradient subsequently used for ATP formation. The extrinsic proteins stabilize the structure of photosystem II oxygen-evolving complex (OEC), the ion environment of oxygen evolution and protect the OEC against heat-induced inactivation. The polypeptide is Photosystem II extrinsic protein U (Trichodesmium erythraeum (strain IMS101)).